A 449-amino-acid polypeptide reads, in one-letter code: Transcription factor AP-2 gamma (449 aa).

A Glycyl lysine isopeptide (Lys-Gly) (interchain with G-Cter in SUMO) cross-link involves residue K10. The interval 13–58 (EDCEDRHDSSSNGNPRIPHLSSPGQHLYSPAPPLSHTGVAEYQPPP) is disordered. The PPxY motif motif lies at 59-64 (YFPPPY). Residues 94 to 130 (AATGSQQQAWPGRQSQEGSSLASHHSRSASLIPHISG) are disordered. Polar residues predominate over residues 95–111 (ATGSQQQAWPGRQSQEG). Positions 112 to 124 (SSLASHHSRSASL) are enriched in low complexity. S251 bears the Phosphoserine; by PKA mark. An H-S-H (helix-span-helix), dimerization region spans residues 292-423 (RRKAAHVTLL…YIKEALIAID (132 aa)). Residues 426–449 (YMNPGDQSPADSSKTMEKMEKHRK) are disordered. Residue S433 is modified to Phosphoserine. Over residues 439–449 (KTMEKMEKHRK) the composition is skewed to basic and acidic residues.

Belongs to the AP-2 family. Binds DNA as a dimer. Can form homodimers or heterodimers with other AP-2 family members. Interacts with WWOX. Interacts with UBE2I. Interacts with KCTD1; this interaction represses transcription activation. Interacts with CITED2 (via C-terminus); the interaction stimulates TFAP2B-transcriptional activity. Interacts with CITED4. Interacts with MTA1. Post-translationally, sumoylated on Lys-10; which inhibits transcriptional activity. Expressed in lung, ovary and testis. Expressed in most squamous epithelia. Also, detected in several exocrine glands including the prostate, the preputial and salivary glands, serous glands of the tongue and ocular harderian glands.

The protein localises to the nucleus. Its function is as follows. Sequence-specific DNA-binding transcription factor that interacts with cellular enhancer elements to regulate transcription of selected genes, and which plays a key role in early embryonic development. AP-2 factors bind to the consensus sequence 5'-GCCNNNGGC-3' and activate genes involved in a large spectrum of important biological functions. TFAP2C plays a key role in early embryonic development by regulating both inner cell mass (ICM) and trophectoderm differentiation. At the 8-cell stage, during morula development, controls expression of cell-polarity genes. Upon trophoblast commitment, binds to late trophectoderm genes in blastocysts together with CDX2, and later to extra-embryonic ectoderm genes together with SOX2. Binds to both closed and open chromatin with other transcription factors. This Mus musculus (Mouse) protein is Transcription factor AP-2 gamma.